Here is a 589-residue protein sequence, read N- to C-terminus: Protein NRT1/ PTR FAMILY 7.2 (589 aa).

The next 2 membrane-spanning stretches (helical) occupy residues 32–52 and 78–98; these read WLTAILILVNQGLATLAFFGV and WTGTVYIFSLLGAFLSDSYWG. Phosphothreonine is present on Thr-102. Helical transmembrane passes span 105–125, 147–167, 187–207, 217–237, 343–363, 377–397, 423–443, 464–484, 504–524, and 548–568; these read IFQASFVAGLMMLSLSTGALL, VLFYLSVYLIALGYGGYQPNI, IAFFSYFYLALNLGSLFSNTV, WPLGFWASAGSAFAGLVLFLI, IWLCTILYSVVFTQMASLFVV, IPASSMSSFDILSVAFFIFAY, MGIGLVIAIMAMISAGIVEIH, IFWQVPQYMLIGASEVFMYVG, LCMASISLGNYVSSLLVSIVM, and FYFLLAGLTAADFVVYLICAK.

This sequence belongs to the major facilitator superfamily. Proton-dependent oligopeptide transporter (POT/PTR) (TC 2.A.17) family. In terms of tissue distribution, expressed in xylem parenchyma cells within the vasculature. Expressed in siliques and flowers. Higher expression in shoots than in roots.

It is found in the cell membrane. Functionally, low-affinity nitrate transporter. Involved in nitrate removal from xylem sap. Not involved in oligopeptides transport. This Arabidopsis thaliana (Mouse-ear cress) protein is Protein NRT1/ PTR FAMILY 7.2 (NPF7.2).